Here is a 264-residue protein sequence, read N- to C-terminus: MRYALAACLLLLAASSFVDAKKKKIADDELGELLDNIDADEEKKSVEPAKNPCEDHQCGWGKECVVGKKGEPTCECISKCPELDGDPMDKVCANNNQTFTSLCDLYRERCLCKRKSKECSKAFNAKVHLEYLGECKKLDECTEEHMAQFPERMADWLFQVMKELKKRRELHKLEWEELLSEAENDDEKKHVYPVIWKFCELDTKPHDKSVSHHELIPITAPVIPMESCIKPFLEGCDANNDGNISIKEWGKCLGLKEGEIQERC.

The signal sequence occupies residues 1 to 16 (MRYALAACLLLLAASS). Residues 52-74 (PCEDHQCGWGKECVVGKKGEPTC) form the Follistatin-like domain. 7 cysteine pairs are disulfide-bonded: cysteine 53/cysteine 64, cysteine 58/cysteine 74, cysteine 76/cysteine 110, cysteine 80/cysteine 103, cysteine 92/cysteine 135, cysteine 141/cysteine 228, and cysteine 236/cysteine 252. Positions 68–137 (KKGEPTCECI…HLEYLGECKK (70 aa)) constitute a Kazal-like domain. Residue asparagine 96 is glycosylated (N-linked (GlcNAc...) asparagine). In terms of domain architecture, EF-hand spans 224 to 259 (PMESCIKPFLEGCDANNDGNISIKEWGKCLGLKEGE). The Ca(2+) site is built by aspartate 237, asparagine 239, aspartate 241, asparagine 243, and glutamate 248. A glycan (N-linked (GlcNAc...) asparagine) is linked at asparagine 243.

This sequence belongs to the SPARC family. In terms of tissue distribution, expressed by body wall and sex muscle cells. Probable association with basement membranes.

Its subcellular location is the secreted. The protein localises to the extracellular space. It is found in the extracellular matrix. The protein resides in the basement membrane. In terms of biological role, has a high affinity for collagen. Affects nematode body morphology and mobility. Essential for C.elegans development and muscle function. The cysteine-rich region could have protease inhibitory activity or may provide the framework for a protein binding module. Probable role in skeletal morphogenesis. In Caenorhabditis elegans, this protein is SPARC (ost-1).